The primary structure comprises 500 residues: MAIKANEISSLIKKQIENFTPDFEVAETGVVTYVGDGIARAYGLENAMSGELVEFSNGILGMAQNLDATDVGIIVLGDFLSIREGDTVKRTGKIMEIQVGEELIGRVVNPLGQPVDGLGELNTGKTRPVEAKAPGVMQRKSVSEPLQTGLKAIDALVPIGRGQRELIIGDRQTGKTSVAIDAILNQKGQDMICIYVAIGQKESTVRTQVETLRKLGAMDYTIVVTASASQPSPLLYIAPYAGAAMGEEFMYNGKHVLVVYDDLSKQAVAYRELSLLLRRPPGREAYPGDVFYLHSRLLERAAKLSDDLGGGSMTALPFIETQAGDISAYIATNVISITDGQIFLENDLFYSGVRPAIDAGSSVSRVGGAAQIKAMKKVAGTLRLDLASFRELEAFTQFGSDLDEATQAKLNRGRRTVEVLKQPLHKPLAVEKQVLILYALTHGHLDNVPVDDVLDFETKMFDFFDANYADLLNVITDTKDLPEEAKLDEAIKAFKNTTNY.

169–176 (GDRQTGKT) lines the ATP pocket.

Belongs to the ATPase alpha/beta chains family. As to quaternary structure, F-type ATPases have 2 components, CF(1) - the catalytic core - and CF(0) - the membrane proton channel. CF(1) has five subunits: alpha(3), beta(3), gamma(1), delta(1), epsilon(1). CF(0) has three main subunits: a(1), b(2) and c(9-12). The alpha and beta chains form an alternating ring which encloses part of the gamma chain. CF(1) is attached to CF(0) by a central stalk formed by the gamma and epsilon chains, while a peripheral stalk is formed by the delta and b chains.

Its subcellular location is the cell membrane. It carries out the reaction ATP + H2O + 4 H(+)(in) = ADP + phosphate + 5 H(+)(out). Functionally, produces ATP from ADP in the presence of a proton gradient across the membrane. The alpha chain is a regulatory subunit. The sequence is that of ATP synthase subunit alpha from Lactococcus lactis subsp. cremoris (strain MG1363).